The following is a 600-amino-acid chain: Myelin expression factor 2 (600 aa).

The tract at residues 1-101 is disordered; it reads MADANKAEVP…GEKKGPNRNR (101 aa). Thr-13 is modified (phosphothreonine). A Phosphoserine modification is found at Ser-17. The span at 27–42 shows a compositional bias: basic and acidic residues; it reads GEPRREPHPAEAEKQQ. Residue Lys-53 forms a Glycyl lysine isopeptide (Lys-Gly) (interchain with G-Cter in SUMO2) linkage. 2 stretches are compositionally biased toward basic and acidic residues: residues 54–72 and 83–96; these read MEND…EKST and YSKD…EKKG. 2 consecutive RRM domains span residues 100-178 and 233-310; these read NRVF…EDPD and STIF…MDDK. The residue at position 406 (Arg-406) is an Omega-N-methylarginine. Ser-431 carries the phosphoserine modification. The RRM 3 domain maps to 523–599; the sequence is NQIFVRNLPF…REIDVRLDRN (77 aa).

In terms of assembly, monomer.

It localises to the nucleus. In terms of biological role, transcriptional repressor of the myelin basic protein gene (MBP). Binds to the proximal MB1 element 5'-TTGTCC-3' of the MBP promoter. Its binding to MB1 and function are inhibited by PURA. The polypeptide is Myelin expression factor 2 (MYEF2) (Homo sapiens (Human)).